Consider the following 187-residue polypeptide: Putative protein SSX8 (187 aa).

2 disordered regions span residues 1 to 21 (MNGDDAFAKRPRDDDKASEKR) and 109 to 187 (PKIM…EDDE). The 64-residue stretch at 20-83 (KRSKAFNDIA…KQATDFQGNY (64 aa)) folds into the KRAB-related domain. A Phosphoserine modification is found at S123. The segment covering 152-168 (KRSGPKRGRHAWTHRLR) has biased composition (basic residues).

Belongs to the SSX family. As to expression, not detected in any normal or tumor tissues.

In terms of biological role, could act as a modulator of transcription. The sequence is that of Putative protein SSX8 from Homo sapiens (Human).